Here is a 282-residue protein sequence, read N- to C-terminus: Biotin synthase (282 aa).

The region spanning 1 to 228 (MQEIFLCSIS…NARLMVAGGR (228 aa)) is the Radical SAM core domain. Positions 17, 21, and 24 each coordinate [4Fe-4S] cluster. Residues Cys61, Cys96, Cys154, and Arg221 each coordinate [2Fe-2S] cluster.

The protein belongs to the radical SAM superfamily. Biotin synthase family. In terms of assembly, homodimer. Requires [4Fe-4S] cluster as cofactor. [2Fe-2S] cluster is required as a cofactor.

The enzyme catalyses (4R,5S)-dethiobiotin + (sulfur carrier)-SH + 2 reduced [2Fe-2S]-[ferredoxin] + 2 S-adenosyl-L-methionine = (sulfur carrier)-H + biotin + 2 5'-deoxyadenosine + 2 L-methionine + 2 oxidized [2Fe-2S]-[ferredoxin]. Its pathway is cofactor biosynthesis; biotin biosynthesis; biotin from 7,8-diaminononanoate: step 2/2. Catalyzes the conversion of dethiobiotin (DTB) to biotin by the insertion of a sulfur atom into dethiobiotin via a radical-based mechanism. The polypeptide is Biotin synthase (Helicobacter pylori (strain ATCC 700392 / 26695) (Campylobacter pylori)).